Here is a 574-residue protein sequence, read N- to C-terminus: Sulfate adenylyltransferase (574 aa).

An N-terminal region spans residues Met1–Tyr169. The segment at Asp170–Leu394 is catalytic. Position 197 (Gln197) interacts with sulfate. Residues Gln197–Asn200 and Gly291–His294 contribute to the ATP site. Catalysis depends on residues Thr198, Arg199, and Asn200. Arg199 lines the sulfate pocket. Ala295 contacts sulfate. Val333 is a binding site for ATP. Residues Gln395–Leu574 are allosteric regulation domain; adenylyl-sulfate kinase-like. 3'-phosphoadenylyl sulfate is bound by residues Asp434 to Arg437, Arg451, Ile477 to Ala478, and Arg516.

It in the N-terminal section; belongs to the sulfate adenylyltransferase family. In the C-terminal section; belongs to the APS kinase family. In terms of assembly, homohexamer. Dimer of trimers.

It localises to the cytoplasm. The catalysed reaction is sulfate + ATP + H(+) = adenosine 5'-phosphosulfate + diphosphate. It functions in the pathway sulfur metabolism; hydrogen sulfide biosynthesis; sulfite from sulfate: step 1/3. Allosterically inhibited by 3'-phosphoadenosine 5'-phosphosulfate (PAPS). In terms of biological role, catalyzes the first intracellular reaction of sulfate assimilation, forming adenosine-5'-phosphosulfate (APS) from inorganic sulfate and ATP. Plays an important role in sulfate activation as a component of the biosynthesis pathway of sulfur-containing amino acids. The sequence is that of Sulfate adenylyltransferase from Emericella nidulans (strain FGSC A4 / ATCC 38163 / CBS 112.46 / NRRL 194 / M139) (Aspergillus nidulans).